Here is a 304-residue protein sequence, read N- to C-terminus: Oxygen-dependent coproporphyrinogen-III oxidase (304 aa).

Serine 94 provides a ligand contact to substrate. The a divalent metal cation site is built by histidine 98 and histidine 108. The Proton donor role is filled by histidine 108. 110–112 (NVR) provides a ligand contact to substrate. Histidine 147 and histidine 177 together coordinate a divalent metal cation. An important for dimerization region spans residues 242-277 (YVEFNLVYDRGTLFGLQTGGRTESILMSMPPLVRWQ). 260–262 (GGR) provides a ligand contact to substrate.

Belongs to the aerobic coproporphyrinogen-III oxidase family. Homodimer. A divalent metal cation serves as cofactor.

Its subcellular location is the cytoplasm. The catalysed reaction is coproporphyrinogen III + O2 + 2 H(+) = protoporphyrinogen IX + 2 CO2 + 2 H2O. It functions in the pathway porphyrin-containing compound metabolism; protoporphyrin-IX biosynthesis; protoporphyrinogen-IX from coproporphyrinogen-III (O2 route): step 1/1. Involved in the heme biosynthesis. Catalyzes the aerobic oxidative decarboxylation of propionate groups of rings A and B of coproporphyrinogen-III to yield the vinyl groups in protoporphyrinogen-IX. In Shewanella amazonensis (strain ATCC BAA-1098 / SB2B), this protein is Oxygen-dependent coproporphyrinogen-III oxidase.